Consider the following 693-residue polypeptide: Polyribonucleotide nucleotidyltransferase (693 aa).

Positions 486 and 492 each coordinate Mg(2+). Positions 553–612 constitute a KH domain; sequence PRFTTLKIHPDKIRDVIGKGGATIRALTEETGTSIDISDDGTVKIASVDKAAGDEARRRI. Residues 622-690 enclose the S1 motif domain; that stretch reads GRIYEGRVVK…KQGRIRLSMK (69 aa).

This sequence belongs to the polyribonucleotide nucleotidyltransferase family. Component of the RNA degradosome, which is a multiprotein complex involved in RNA processing and mRNA degradation. Requires Mg(2+) as cofactor.

It localises to the cytoplasm. It catalyses the reaction RNA(n+1) + phosphate = RNA(n) + a ribonucleoside 5'-diphosphate. Functionally, involved in mRNA degradation. Catalyzes the phosphorolysis of single-stranded polyribonucleotides processively in the 3'- to 5'-direction. The protein is Polyribonucleotide nucleotidyltransferase of Thioalkalivibrio sulfidiphilus (strain HL-EbGR7).